A 367-amino-acid polypeptide reads, in one-letter code: Ribosomal lysine N-methyltransferase 5 (367 aa).

The disordered stretch occupies residues 55–74; sequence EGGRKKKRVRRRNKASSVEE. The segment covering 58–68 has biased composition (basic residues); that stretch reads RKKKRVRRRNK. S-adenosyl-L-methionine-binding positions include tryptophan 110, 170–172, aspartate 192, tryptophan 256, and methionine 288; that span reads GAG.

Belongs to the class I-like SAM-binding methyltransferase superfamily. RKM5 family.

S-adenosyl-L-methionine-dependent protein-lysine N-methyltransferase that monomethylates 60S ribosomal protein L1 (RPL1A and RPL1B) at 'Lys-46'. The sequence is that of Ribosomal lysine N-methyltransferase 5 (RKM5) from Saccharomyces cerevisiae (strain Lalvin EC1118 / Prise de mousse) (Baker's yeast).